Here is a 940-residue protein sequence, read N- to C-terminus: Serine/threonine-protein phosphatase 1 regulatory subunit 10 (940 aa).

An interaction with TOX4 region spans residues 1-348 (MGSGPIDPKE…EPAPPSEAMD (348 aa)). In terms of domain architecture, TFIIS N-terminal spans 73 to 147 (KLLNNWLTYS…SDWMAVIRSQ (75 aa)). 4 disordered regions span residues 147–211 (QSST…FRST), 247–270 (SNVA…NTTP), 304–400 (KIKK…KSVT), and 533–905 (YVET…HGGD). Basic and acidic residues-rich tracts occupy residues 153–166 (AEKD…EGKS) and 174–196 (PLTE…EKPK). Residue lysine 179 forms a Glycyl lysine isopeptide (Lys-Gly) (interchain with G-Cter in SUMO2) linkage. Threonine 256 bears the Phosphothreonine mark. Residue lysine 262 forms a Glycyl lysine isopeptide (Lys-Gly) (interchain with G-Cter in SUMO2) linkage. A Phosphoserine modification is found at serine 313. A compositionally biased stretch (low complexity) spans 325 to 336 (KTSTEPSTAKPS). Positions 357 to 433 (PPVEVPELMD…NKIKDFGEAA (77 aa)) are necessary for interaction with PPP1CA. Serine 382 bears the Phosphoserine mark. Residues 393–408 (GRKRKSVTWPEEGKLR) form a necessary for interaction with PPP1CC region. A PP1-binding motif motif is present at residues 394–423 (RKRKSVTWPEEGKLREYFYFELDETERVNV). Residue serine 398 is modified to Phosphoserine; by PKA. The segment at 418–619 (TERVNVNKIK…IKQMLVPHGL (202 aa)) is interaction with WDR82. Composition is skewed to gly residues over residues 540-551 (GGSGGSPDGAGG) and 565-579 (MGAG…GGGI). Serine 545 bears the Phosphoserine mark. The segment covering 583-595 (EILTSIMGSPNSH) has biased composition (polar residues). Serine 591 is modified (phosphoserine). Over residues 596-611 (PSEELLKQPDYSDKIK) the composition is skewed to basic and acidic residues. Pro residues predominate over residues 644-655 (PPGPGGPMPGPH). At arginine 665 the chain carries Omega-N-methylarginine. Residues 676-690 (GDPFWDGPGDPMRGG) show a composition bias toward low complexity. Arginine 693 carries the omega-N-methylarginine modification. A compositionally biased stretch (pro residues) spans 714-723 (EPPPPPPPPF). Gly residues-rich tracts occupy residues 726–764 (ARGG…GMGN) and 790–845 (SSMG…GSGG). Arginine 739 carries the post-translational modification Omega-N-methylarginine. Composition is skewed to basic and acidic residues over residues 862 to 886 (PHDV…HDGP) and 894 to 903 (RGHDGGHSHG). A C3H1-type zinc finger spans residues 906 to 934 (MSNRPVCRHFMMKGNCRYENNCAFYHPGV).

As to quaternary structure, component of the PNUTS-PP1 complex (also named PTW/PP1 complex), composed of PPP1R10/PNUTS, TOX4, WDR82, and PPP1CA (or PPP1CB or PPP1CC). Phosphorylated on Ser-398 by PKA within the region necessary for interaction with PPP1CA.

It localises to the nucleus. The protein localises to the chromosome. In terms of biological role, substrate-recognition component of the PNUTS-PP1 protein phosphatase complex, a protein phosphatase 1 (PP1) complex that promotes RNA polymerase II transcription pause-release, allowing transcription elongation. Promoter-proximal pausing by RNA polymerase II is a transcription halt following transcription initiation but prior to elongation, which acts as a checkpoint to control that transcripts are favorably configured for transcriptional elongation. The PNUTS-PP1 complex mediates the release of RNA polymerase II from promoter-proximal region of genes by catalyzing dephosphorylation of proteins involved in transcription, such as AFF4, CDK9, MEPCE, INTS12, NCBP1, POLR2M/GDOWN1 and SUPT6H. The PNUTS-PP1 complex also regulates RNA polymerase II transcription termination by mediating dephosphorylation of SUPT5H in termination zones downstream of poly(A) sites, thereby promoting deceleration of RNA polymerase II transcription. PNUTS-PP1 complex is also involved in the response to replication stress by mediating dephosphorylation of POLR2A at 'Ser-5' of the CTD, promoting RNA polymerase II degradation. The PNUTS-PP1 complex also plays a role in the control of chromatin structure and cell cycle progression during the transition from mitosis into interphase. PNUTS-PP1 complex mediates dephosphorylation of MYC, promoting MYC stability by preventing MYC ubiquitination by the SCF(FBXW7) complex. In addition to acts as a substrate-recognition component, PPP1R10/PNUTS also acts as a nuclear targeting subunit for the PNUTS-PP1 complex. In some context, PPP1R10/PNUTS also acts as an inhibitor of protein phosphatase 1 (PP1) activity by preventing access to substrates, such as RB. The protein is Serine/threonine-protein phosphatase 1 regulatory subunit 10 (PPP1R10) of Macaca mulatta (Rhesus macaque).